The chain runs to 314 residues: Olfactory receptor 51G2 (314 aa).

At 1–30 (MTLGSLGNSSSSVSATFLLSGIPGLERMHI) the chain is on the extracellular side. N-linked (GlcNAc...) asparagine glycosylation occurs at asparagine 8. The helical transmembrane segment at 31 to 51 (WISIPLCFMYLVSIPGNCTIL) threads the bilayer. Over 52–59 (FIIKTERS) the chain is Cytoplasmic. The chain crosses the membrane as a helical span at residues 60 to 80 (LHEPMYLFLSMLALIDLGLSL). Residues 81–104 (CTLPTVLGIFWVGAREISHDACFA) lie on the Extracellular side of the membrane. Cysteine 102 and cysteine 194 are joined by a disulfide. Residues 105–125 (QLFFIHCFSFLESSVLLSMAF) form a helical membrane-spanning segment. At 126–144 (DRFVAICHPLHYVSILTNT) the chain is on the cytoplasmic side. The helical transmembrane segment at 145 to 165 (VIGRIGLVSLGRSVALIFPLP) threads the bilayer. Over 166–201 (FMLKRFPYCGSPVLSHSYCLHQEVMKLACADMKANS) the chain is Extracellular. The chain crosses the membrane as a helical span at residues 202–222 (IYGMFVIVSTVGIDSLLILFS). Residues 223–242 (YALILRTVLSIASRAERFKA) lie on the Cytoplasmic side of the membrane. A helical transmembrane segment spans residues 243 to 263 (LNTCVSHICAVLLFYTPMIGL). Residues 264–278 (SVIHRFGKQAPHLVQ) lie on the Extracellular side of the membrane. The chain crosses the membrane as a helical span at residues 279–299 (VVMGFMYLLFPPVMNPIVYSV). Residues 300–314 (KTKQIRDRVTHAFCY) are Cytoplasmic-facing.

The protein belongs to the G-protein coupled receptor 1 family.

The protein localises to the cell membrane. Odorant receptor. This is Olfactory receptor 51G2 (OR51G2) from Homo sapiens (Human).